The chain runs to 123 residues: Protein HesB, heterocyst (123 aa).

It belongs to the HesB/IscA family.

May be required for efficient nitrogen fixation. The sequence is that of Protein HesB, heterocyst (hesB1) from Trichormus variabilis (strain ATCC 29413 / PCC 7937) (Anabaena variabilis).